A 299-amino-acid polypeptide reads, in one-letter code: RING-H2 finger protein ATL20 (299 aa).

The helical transmembrane segment at 172-192 (LIITLCIIGGITATCIAAIRI) threads the bilayer. The RING-type; atypical zinc-finger motif lies at 253–295 (CPICLSEYASKETVRCMPECDHCFHVQCIDEWLKIHSSCPVCR).

This sequence belongs to the RING-type zinc finger family. ATL subfamily.

It is found in the membrane. The catalysed reaction is S-ubiquitinyl-[E2 ubiquitin-conjugating enzyme]-L-cysteine + [acceptor protein]-L-lysine = [E2 ubiquitin-conjugating enzyme]-L-cysteine + N(6)-ubiquitinyl-[acceptor protein]-L-lysine.. The protein operates within protein modification; protein ubiquitination. This is RING-H2 finger protein ATL20 (ATL20) from Arabidopsis thaliana (Mouse-ear cress).